We begin with the raw amino-acid sequence, 292 residues long: Polyamine aminopropyltransferase 1 (292 aa).

The PABS domain occupies 1–244 (MELGMFRLNI…YVNSFVFASD (244 aa)). Gln35 lines the S-methyl-5'-thioadenosine pocket. 2 residues coordinate spermidine: His66 and Glu90. Residues Asp110 and 142–143 (DG) each bind S-methyl-5'-thioadenosine. Asp163 acts as the Proton acceptor in catalysis.

Belongs to the spermidine/spermine synthase family. As to quaternary structure, homodimer or homotetramer.

The protein resides in the cytoplasm. The enzyme catalyses norspermine + S-adenosyl 3-(methylsulfanyl)propylamine = caldopentamine + S-methyl-5'-thioadenosine + 2 H(+). It carries out the reaction norspermidine + S-adenosyl 3-(methylsulfanyl)propylamine = norspermine + S-methyl-5'-thioadenosine + H(+). It catalyses the reaction S-adenosyl 3-(methylsulfanyl)propylamine + spermidine = thermospermine + S-methyl-5'-thioadenosine + H(+). In terms of biological role, involved in the biosynthesis of polyamines which are thought to support the growth of thermophilic microorganisms under high-temperature conditions. It seems that long-chain and branched-chain of polyamines effectively stabilize DNA and RNA, respectively. Catalyzes the irreversible transfer of a propylamine group from the amino donor S-adenosylmethioninamine (decarboxy-AdoMet) to norspermidine, spermidine and norspermine to yield norspermine, thermospermine and caldopentamine, respectively. It can also synthesize sym-norspermidine (bis(3-aminopropyl)amine) from 1,3-diaminopropane with a very low activity. The biosynthesis of caldohexamine and caldoheptamine from caldopentamine has been also observed. In Hyperthermus butylicus (strain DSM 5456 / JCM 9403 / PLM1-5), this protein is Polyamine aminopropyltransferase 1.